A 138-amino-acid chain; its full sequence is uncharacterized protein (138 aa).

A signal peptide spans 1–37 (MNSTFTSQPLLNRSEPRVFKEFYRLVIGCNPAWQVMA).

It to H.influenzae HI_1631.

This is an uncharacterized protein from Sinorhizobium fredii (strain NBRC 101917 / NGR234).